Consider the following 657-residue polypeptide: tRNA 5-methylaminomethyl-2-thiouridine biosynthesis bifunctional protein MnmC (657 aa).

The tRNA (mnm(5)s(2)U34)-methyltransferase stretch occupies residues 1 to 239; it reads MTDRIVPATL…KRAMLVGEFA (239 aa). Residues 263–657 are FAD-dependent cmnm(5)s(2)U34 oxidoreductase; that stretch reads IGAGLAGCAV…VRALRHGRVA (395 aa).

This sequence in the N-terminal section; belongs to the methyltransferase superfamily. tRNA (mnm(5)s(2)U34)-methyltransferase family. In the C-terminal section; belongs to the DAO family. It depends on FAD as a cofactor.

It is found in the cytoplasm. It catalyses the reaction 5-aminomethyl-2-thiouridine(34) in tRNA + S-adenosyl-L-methionine = 5-methylaminomethyl-2-thiouridine(34) in tRNA + S-adenosyl-L-homocysteine + H(+). Catalyzes the last two steps in the biosynthesis of 5-methylaminomethyl-2-thiouridine (mnm(5)s(2)U) at the wobble position (U34) in tRNA. Catalyzes the FAD-dependent demodification of cmnm(5)s(2)U34 to nm(5)s(2)U34, followed by the transfer of a methyl group from S-adenosyl-L-methionine to nm(5)s(2)U34, to form mnm(5)s(2)U34. The polypeptide is tRNA 5-methylaminomethyl-2-thiouridine biosynthesis bifunctional protein MnmC (Burkholderia mallei (strain SAVP1)).